Here is a 450-residue protein sequence, read N- to C-terminus: Chromosomal replication initiator protein DnaA (450 aa).

Residues 1 to 69 are domain I, interacts with DnaA modulators; that stretch reads MHDVWRQATE…VGALSVTAGK (69 aa). The segment at 69–113 is domain II; the sequence is KKYFIELVVQEEDQNAEVPQAEDLIIKGHQEIEQPVTSQPETSSS. The domain III, AAA+ region stretch occupies residues 114–330; that stretch reads SLNPKYTFEL…GMLIRLGAYS (217 aa). The ATP site is built by glycine 158, glycine 160, lysine 161, and serine 162. The domain IV, binds dsDNA stretch occupies residues 331-450; sequence SLQGIPITLD…IEDIKLILLK (120 aa).

It belongs to the DnaA family. As to quaternary structure, oligomerizes as a right-handed, spiral filament on DNA at oriC.

The protein localises to the cytoplasm. In terms of biological role, plays an essential role in the initiation and regulation of chromosomal replication. ATP-DnaA binds to the origin of replication (oriC) to initiate formation of the DNA replication initiation complex once per cell cycle. Binds the DnaA box (a 9 base pair repeat at the origin) and separates the double-stranded (ds)DNA. Forms a right-handed helical filament on oriC DNA; dsDNA binds to the exterior of the filament while single-stranded (ss)DNA is stabiized in the filament's interior. The ATP-DnaA-oriC complex binds and stabilizes one strand of the AT-rich DNA unwinding element (DUE), permitting loading of DNA polymerase. After initiation quickly degrades to an ADP-DnaA complex that is not apt for DNA replication. Binds acidic phospholipids. This Pelobacter propionicus (strain DSM 2379 / NBRC 103807 / OttBd1) protein is Chromosomal replication initiator protein DnaA.